Here is a 238-residue protein sequence, read N- to C-terminus: Large ribosomal subunit protein uL1 (238 aa).

Belongs to the universal ribosomal protein uL1 family. Part of the 50S ribosomal subunit.

Binds directly to 23S rRNA. The L1 stalk is quite mobile in the ribosome, and is involved in E site tRNA release. In terms of biological role, protein L1 is also a translational repressor protein, it controls the translation of the L11 operon by binding to its mRNA. In Picosynechococcus sp. (strain ATCC 27264 / PCC 7002 / PR-6) (Agmenellum quadruplicatum), this protein is Large ribosomal subunit protein uL1.